A 148-amino-acid chain; its full sequence is MNKQARHFKIREILQRHSVENQHDLLQLLREQGMSVAQATLSRDCAELGLMRVRVNGSYRMVVPDDNAGRIIKGLVGIEVLSINANETTVIIRTLPGRAHGVGSYLDQLKSPLVLGTIAGDDTVLVIPASVHNISSLIAYIHSNLSKT.

The protein belongs to the ArgR family.

It localises to the cytoplasm. The protein operates within amino-acid biosynthesis; L-arginine biosynthesis [regulation]. Its function is as follows. Regulates arginine biosynthesis genes. This chain is Arginine repressor, found in Chlorobium chlorochromatii (strain CaD3).